A 209-amino-acid polypeptide reads, in one-letter code: Molybdenum cofactor guanylyltransferase (209 aa).

GTP-binding positions include 16 to 18 (LAG), K28, N56, D69, and D103. D103 contacts Mg(2+).

Belongs to the MobA family. In terms of assembly, monomer. The cofactor is Mg(2+).

The protein localises to the cytoplasm. The catalysed reaction is Mo-molybdopterin + GTP + H(+) = Mo-molybdopterin guanine dinucleotide + diphosphate. Transfers a GMP moiety from GTP to Mo-molybdopterin (Mo-MPT) cofactor (Moco or molybdenum cofactor) to form Mo-molybdopterin guanine dinucleotide (Mo-MGD) cofactor. This chain is Molybdenum cofactor guanylyltransferase, found in Rhizobium leguminosarum bv. trifolii (strain WSM2304).